The following is a 335-amino-acid chain: Transmembrane protein 120B (335 aa).

Residues 1–39 (MSLQKCQEEWGELEKEFQQLQETHKVYKQKLEELNGLQN) are a coiled coil. 6 helical membrane-spanning segments follow: residues 100-122 (GLYL…AKFA), 130-150 (FKLY…FVLH), 157-177 (VFNF…SILI), 193-213 (VSTF…YQIF), 268-288 (FLLP…ITLF), and 300-320 (QVFV…LTTL).

It belongs to the TMEM120 family.

The protein resides in the nucleus inner membrane. Necessary for efficient adipogenesis. Does not show ion channel activity. The polypeptide is Transmembrane protein 120B (tmem120b) (Xenopus tropicalis (Western clawed frog)).